The following is a 62-amino-acid chain: Large ribosomal subunit protein uL29 (62 aa).

Belongs to the universal ribosomal protein uL29 family.

This is Large ribosomal subunit protein uL29 from Syntrophotalea carbinolica (strain DSM 2380 / NBRC 103641 / GraBd1) (Pelobacter carbinolicus).